Here is a 511-residue protein sequence, read N- to C-terminus: Chromosomal replication initiator protein DnaA (511 aa).

The tract at residues 1 to 90 (MSVELWQQCV…RRSSAPRAAP (90 aa)) is domain I, interacts with DnaA modulators. A domain II region spans residues 91–174 (NAPVSAAMAA…QVEGALKHTS (84 aa)). Residues 125-161 (TAEPAQASDMAEASSRDSYDSMADSAPAPVAPGRTEQ) form a disordered region. The segment at 175–391 (YLNRTFTFET…GALKRVIAHS (217 aa)) is domain III, AAA+ region. Residues Gly-219, Gly-221, Lys-222, and Thr-223 each coordinate ATP. The domain IV, binds dsDNA stretch occupies residues 392-511 (HFMGRDITIE…YKNLLRTLTT (120 aa)).

The protein belongs to the DnaA family. Oligomerizes as a right-handed, spiral filament on DNA at oriC.

Its subcellular location is the cytoplasm. Its function is as follows. Plays an essential role in the initiation and regulation of chromosomal replication. ATP-DnaA binds to the origin of replication (oriC) to initiate formation of the DNA replication initiation complex once per cell cycle. Binds the DnaA box (a 9 base pair repeat at the origin) and separates the double-stranded (ds)DNA. Forms a right-handed helical filament on oriC DNA; dsDNA binds to the exterior of the filament while single-stranded (ss)DNA is stabiized in the filament's interior. The ATP-DnaA-oriC complex binds and stabilizes one strand of the AT-rich DNA unwinding element (DUE), permitting loading of DNA polymerase. After initiation quickly degrades to an ADP-DnaA complex that is not apt for DNA replication. Binds acidic phospholipids. The sequence is that of Chromosomal replication initiator protein DnaA from Pseudomonas putida (strain W619).